The following is a 207-amino-acid chain: Microtubule-associated protein Jupiter (207 aa).

The residue at position 30 (Ser30) is a Phosphoserine. Residues Thr41 and Thr102 each carry the phosphothreonine modification. Ser111, Ser138, and Ser149 each carry phosphoserine. 2 disordered regions span residues 129–174 (KGKY…YKAG) and 188–207 (GNQVINKNRVPPGGYSSGLW). The span at 136–149 (SGSVSSASSSVSSS) shows a compositional bias: low complexity. Over residues 150–164 (TENLKINVGNRSDGN) the composition is skewed to polar residues.

This sequence belongs to the MAP Jupiter family.

The protein localises to the nucleus. Its subcellular location is the cytoplasm. The protein resides in the cytoskeleton. It is found in the spindle. Binds to all microtubule populations. In Drosophila grimshawi (Hawaiian fruit fly), this protein is Microtubule-associated protein Jupiter.